The chain runs to 43 residues: Protein PsbN (43 aa).

A helical membrane pass occupies residues 5–25 (TVLSIFISSLLLGITIYSIYI).

Belongs to the PsbN family.

It is found in the plastid. Its subcellular location is the chloroplast thylakoid membrane. Functionally, may play a role in photosystem I and II biogenesis. This chain is Protein PsbN, found in Gracilaria tenuistipitata var. liui (Red alga).